The chain runs to 303 residues: tRNA pseudouridine synthase B (303 aa).

Asp47 functions as the Nucleophile in the catalytic mechanism.

It belongs to the pseudouridine synthase TruB family. Type 1 subfamily.

It carries out the reaction uridine(55) in tRNA = pseudouridine(55) in tRNA. Responsible for synthesis of pseudouridine from uracil-55 in the psi GC loop of transfer RNAs. This is tRNA pseudouridine synthase B from Ruegeria pomeroyi (strain ATCC 700808 / DSM 15171 / DSS-3) (Silicibacter pomeroyi).